Reading from the N-terminus, the 452-residue chain is Retinoid-inducible serine carboxypeptidase (452 aa).

Residues methionine 1 to alanine 28 form the signal peptide. Residues asparagine 64, asparagine 102, and asparagine 126 are each glycosylated (N-linked (GlcNAc...) asparagine). Serine 167 is an active-site residue. N-linked (GlcNAc...) asparagine glycosylation is found at asparagine 192 and asparagine 362. Active-site residues include aspartate 371 and histidine 431.

Belongs to the peptidase S10 family.

Its subcellular location is the secreted. May be involved in vascular wall and kidney homeostasis. In Mus musculus (Mouse), this protein is Retinoid-inducible serine carboxypeptidase (Scpep1).